We begin with the raw amino-acid sequence, 64 residues long: Large ribosomal subunit protein bL35 (64 aa).

Residues 1–10 show a composition bias toward polar residues; that stretch reads MPKMKTNSAA. Residues 1–64 are disordered; it reads MPKMKTNSAA…AKKLHQLLQK (64 aa). Positions 54 to 64 are enriched in basic residues; that stretch reads QAKKLHQLLQK.

This sequence belongs to the bacterial ribosomal protein bL35 family.

The polypeptide is Large ribosomal subunit protein bL35 (Bifidobacterium longum (strain NCC 2705)).